Consider the following 96-residue polypeptide: Seed trypsin/chymotrypsin inhibitor IVA (96 aa).

The N-terminal stretch at 1 to 10 (LSFAANVVNA) is a signal peptide. Positions 11 to 24 (RFDSTSFITQVLSN) are excised as a propeptide. 7 disulfides stabilise this stretch: C32/C85, C33/C48, C36/C81, C38/C46, C55/C62, C59/C74, and C64/C72. Positions 88-96 (SEVEEVIKN) are cleaved as a propeptide — removed in PSTI I.

It belongs to the Bowman-Birk serine protease inhibitor family. In terms of tissue distribution, seed.

Functionally, inhibitor of trypsin and of chymotrypsin. May function as a natural phytochemical defense against predators. The protein is Seed trypsin/chymotrypsin inhibitor IVA (TI1236) of Pisum sativum (Garden pea).